The primary structure comprises 335 residues: Ethanol acetyltransferase 1 (335 aa).

Residues 48-300 (PIVFVHGIFG…NSAHDILDQR (253 aa)) form the AB hydrolase-1 domain. Active-site charge relay system residues include S121, D145, and H294.

Belongs to the AB hydrolase superfamily.

The protein localises to the mitochondrion. It catalyses the reaction ethanol + acetyl-CoA = ethyl acetate + CoA. The catalysed reaction is acetyl-CoA + H2O = acetate + CoA + H(+). It carries out the reaction ethyl acetate + H2O = ethanol + acetate + H(+). Functionally, alcohol acetyltransferase that catalyzes the synthesis of ethyl acetate from ethanol and acetyl-CoA. Can also function as a thioesterase by hydrolyzing acetyl-CoA in the absence of ethanol, as well as esterase hydrolyzing ethyl acetate. In Cyberlindnera fabianii (Yeast), this protein is Ethanol acetyltransferase 1 (EAT1).